A 588-amino-acid chain; its full sequence is uncharacterized protein (588 aa).

Transmembrane regions (helical) follow at residues 14–34 (FLLFLPYFIGLLFLGFIKGIV), 49–69 (AVILSLLPVHIVWTFYSIVSA), 78–98 (IFLCLCLPAAIILWPIVGILG), 184–204 (ALVVSVLGILVDPPVISLVAI), 235–255 (VPIAGLAILLWPLAVTGAVIG), 257–274 (VISSIFLGAYAGVVSYQE), and 275–292 (SSFYYGLCYIVASVSIYD). Position 486 is a phosphoserine (Ser-486). The interval 566–588 (RKGSVNGSDQESQKGVSRNVDIV) is disordered. Polar residues predominate over residues 570–581 (VNGSDQESQKGV).

It localises to the membrane. This is an uncharacterized protein from Arabidopsis thaliana (Mouse-ear cress).